Reading from the N-terminus, the 188-residue chain is Elongation factor P (188 aa).

An N6-(3,6-diaminohexanoyl)-5-hydroxylysine modification is found at Lys-34.

The protein belongs to the elongation factor P family. Post-translationally, may be beta-lysylated on the epsilon-amino group of Lys-34 by the combined action of EpmA and EpmB, and then hydroxylated on the C5 position of the same residue by EpmC (if this protein is present). Lysylation is critical for the stimulatory effect of EF-P on peptide-bond formation. The lysylation moiety may extend toward the peptidyltransferase center and stabilize the terminal 3-CCA end of the tRNA. Hydroxylation of the C5 position on Lys-34 may allow additional potential stabilizing hydrogen-bond interactions with the P-tRNA.

Its subcellular location is the cytoplasm. The protein operates within protein biosynthesis; polypeptide chain elongation. Involved in peptide bond synthesis. Alleviates ribosome stalling that occurs when 3 or more consecutive Pro residues or the sequence PPG is present in a protein, possibly by augmenting the peptidyl transferase activity of the ribosome. Modification of Lys-34 is required for alleviation. The polypeptide is Elongation factor P (Enterobacter sp. (strain 638)).